The primary structure comprises 115 residues: Large ribosomal subunit protein uL24 (115 aa).

The protein belongs to the universal ribosomal protein uL24 family. Part of the 50S ribosomal subunit.

Its function is as follows. One of two assembly initiator proteins, it binds directly to the 5'-end of the 23S rRNA, where it nucleates assembly of the 50S subunit. Functionally, one of the proteins that surrounds the polypeptide exit tunnel on the outside of the subunit. This is Large ribosomal subunit protein uL24 from Phytoplasma mali (strain AT).